Reading from the N-terminus, the 88-residue chain is Large ribosomal subunit protein eL37 (88 aa).

The tract at residues 1 to 24 is disordered; sequence MTKGTTSFGKRHNKSHTQCRRCGR. Positions 9–24 are enriched in basic residues; the sequence is GKRHNKSHTQCRRCGR. Residues C19, C22, C34, and C37 each contribute to the Zn(2+) site. Residues 19-37 form a C4-type zinc finger; sequence CRRCGRKSYHIQKKTCSSC.

The protein belongs to the eukaryotic ribosomal protein eL37 family. Requires Zn(2+) as cofactor.

Functionally, binds to the 23S rRNA. The protein is Large ribosomal subunit protein eL37 (RPL37) of Schistosoma mansoni (Blood fluke).